A 349-amino-acid polypeptide reads, in one-letter code: Phosphoribosylformylglycinamidine cyclo-ligase (349 aa).

The protein belongs to the AIR synthase family.

It is found in the cytoplasm. It catalyses the reaction 2-formamido-N(1)-(5-O-phospho-beta-D-ribosyl)acetamidine + ATP = 5-amino-1-(5-phospho-beta-D-ribosyl)imidazole + ADP + phosphate + H(+). It functions in the pathway purine metabolism; IMP biosynthesis via de novo pathway; 5-amino-1-(5-phospho-D-ribosyl)imidazole from N(2)-formyl-N(1)-(5-phospho-D-ribosyl)glycinamide: step 2/2. The sequence is that of Phosphoribosylformylglycinamidine cyclo-ligase from Methanococcus maripaludis (strain DSM 14266 / JCM 13030 / NBRC 101832 / S2 / LL).